A 269-amino-acid chain; its full sequence is Formamidopyrimidine-DNA glycosylase (269 aa).

Pro2 (schiff-base intermediate with DNA) is an active-site residue. Glu3 (proton donor) is an active-site residue. The Proton donor; for beta-elimination activity role is filled by Lys58. Residues His91, Arg110, and Lys150 each coordinate DNA. The FPG-type zinc-finger motif lies at 235–269; the sequence is SVYGCENKTCHFCKSKIIKIVQNQRSTFYCRKCQT. Arg259 serves as the catalytic Proton donor; for delta-elimination activity.

This sequence belongs to the FPG family. In terms of assembly, monomer. It depends on Zn(2+) as a cofactor.

The catalysed reaction is Hydrolysis of DNA containing ring-opened 7-methylguanine residues, releasing 2,6-diamino-4-hydroxy-5-(N-methyl)formamidopyrimidine.. It carries out the reaction 2'-deoxyribonucleotide-(2'-deoxyribose 5'-phosphate)-2'-deoxyribonucleotide-DNA = a 3'-end 2'-deoxyribonucleotide-(2,3-dehydro-2,3-deoxyribose 5'-phosphate)-DNA + a 5'-end 5'-phospho-2'-deoxyribonucleoside-DNA + H(+). Functionally, involved in base excision repair of DNA damaged by oxidation or by mutagenic agents. Acts as a DNA glycosylase that recognizes and removes damaged bases. Has a preference for oxidized purines, such as 7,8-dihydro-8-oxoguanine (8-oxoG). Has AP (apurinic/apyrimidinic) lyase activity and introduces nicks in the DNA strand. Cleaves the DNA backbone by beta-delta elimination to generate a single-strand break at the site of the removed base with both 3'- and 5'-phosphates. This chain is Formamidopyrimidine-DNA glycosylase, found in Ruthia magnifica subsp. Calyptogena magnifica.